An 84-amino-acid chain; its full sequence is UPF0320 protein YNR077C (84 aa).

Belongs to the UPF0320 family.

The protein is UPF0320 protein YNR077C of Saccharomyces cerevisiae (strain ATCC 204508 / S288c) (Baker's yeast).